Reading from the N-terminus, the 60-residue chain is Beta-toxin BotIT2 (60 aa).

Residues 1-60 form the LCN-type CS-alpha/beta domain; sequence DGYIKGYKGCKITCVINDDYCDTECKAEGGTYGYCWKWGLACWCEDLPDEKRWKSETNTC. 4 disulfide bridges follow: C10–C60, C14–C35, C21–C42, and C25–C44.

This sequence belongs to the long (4 C-C) scorpion toxin superfamily. Sodium channel inhibitor family. Beta subfamily. As to expression, expressed by the venom gland.

It localises to the secreted. Beta toxins bind voltage-independently at site-4 of sodium channels (Nav) and shift the voltage of activation toward more negative potentials thereby affecting sodium channel activation and promoting spontaneous and repetitive firing. This toxin specifically acts by inducing a new current with very slow activation/deactivation kinetics due to the transformation of normal fast channels into slow ones. It possess properties of excitatory and depressant toxins. It is highly active on insects and less active on mammals. The polypeptide is Beta-toxin BotIT2 (Buthus occitanus tunetanus (Common European scorpion)).